The sequence spans 153 residues: Aspartate carbamoyltransferase regulatory chain (153 aa).

Residues Cys-109, Cys-114, Cys-138, and Cys-141 each contribute to the Zn(2+) site.

The protein belongs to the PyrI family. Contains catalytic and regulatory chains. The cofactor is Zn(2+).

In terms of biological role, involved in allosteric regulation of aspartate carbamoyltransferase. The protein is Aspartate carbamoyltransferase regulatory chain of Shigella dysenteriae serotype 1 (strain Sd197).